The following is a 155-amino-acid chain: Photosystem II extrinsic protein V (155 aa).

Residues 1–20 (MFVKMIGWLVLFLFAHQTWA) form the signal peptide. Positions 50, 53, 54, and 105 each coordinate heme c.

The protein belongs to the cytochrome c family. PsbV subfamily. In terms of assembly, PSII is composed of 1 copy each of membrane proteins PsbA, PsbB, PsbC, PsbD, PsbE, PsbF, PsbH, PsbI, PsbJ, PsbK, PsbL, PsbM, PsbT, PsbY, PsbZ, Psb30/Ycf12, at least 3 peripheral proteins of the oxygen-evolving complex and a large number of cofactors. It forms dimeric complexes. The extrinsic subunits in red algae are PsbO (OEC33), PsbQ', cytochrome c-550 and PsbU. Requires heme c as cofactor.

It localises to the plastid. It is found in the chloroplast thylakoid membrane. Its function is as follows. One of the extrinsic, lumenal subunits of photosystem II (PSII). PSII is a light-driven water plastoquinone oxidoreductase, using light energy to abstract electrons from H(2)O, generating a proton gradient subsequently used for ATP formation. The extrinsic proteins stabilize the structure of photosystem II oxygen-evolving complex (OEC), the ion environment of oxygen evolution and protect the OEC against heat-induced inactivation. Unlike the T.vulcanus ortholog, it does not bind by itself to PSII, but requires all extrinsic members of the OEC. In Cyanidium caldarium (Red alga), this protein is Photosystem II extrinsic protein V.